We begin with the raw amino-acid sequence, 369 residues long: Chaperone protein DnaJ (369 aa).

Residues Asp-7–Gly-73 enclose the J domain. Residues Gly-143–Lys-225 form a CR-type zinc finger. Residues Cys-156, Cys-159, Cys-173, Cys-176, Cys-199, Cys-202, Cys-213, and Cys-216 each contribute to the Zn(2+) site. CXXCXGXG motif repeat units lie at residues Cys-156–Gly-163, Cys-173–Gly-180, Cys-199–Gly-206, and Cys-213–Gly-220.

This sequence belongs to the DnaJ family. Homodimer. The cofactor is Zn(2+).

The protein resides in the cytoplasm. Functionally, participates actively in the response to hyperosmotic and heat shock by preventing the aggregation of stress-denatured proteins and by disaggregating proteins, also in an autonomous, DnaK-independent fashion. Unfolded proteins bind initially to DnaJ; upon interaction with the DnaJ-bound protein, DnaK hydrolyzes its bound ATP, resulting in the formation of a stable complex. GrpE releases ADP from DnaK; ATP binding to DnaK triggers the release of the substrate protein, thus completing the reaction cycle. Several rounds of ATP-dependent interactions between DnaJ, DnaK and GrpE are required for fully efficient folding. Also involved, together with DnaK and GrpE, in the DNA replication of plasmids through activation of initiation proteins. This is Chaperone protein DnaJ from Thermotoga sp. (strain RQ2).